The following is a 337-amino-acid chain: Glyceraldehyde-3-phosphate dehydrogenase 1 (337 aa).

NAD(+)-binding positions include 12-13 (RI), aspartate 34, and methionine 79. D-glyceraldehyde 3-phosphate-binding positions include 151 to 153 (SCT), threonine 182, 211 to 212 (TG), and arginine 234. Residue cysteine 152 is the Nucleophile of the active site. Position 316 (asparagine 316) interacts with NAD(+).

The protein belongs to the glyceraldehyde-3-phosphate dehydrogenase family. As to quaternary structure, homotetramer.

Its subcellular location is the cytoplasm. The catalysed reaction is D-glyceraldehyde 3-phosphate + phosphate + NAD(+) = (2R)-3-phospho-glyceroyl phosphate + NADH + H(+). Its pathway is carbohydrate degradation; glycolysis; pyruvate from D-glyceraldehyde 3-phosphate: step 1/5. This chain is Glyceraldehyde-3-phosphate dehydrogenase 1 (GAP1), found in Giardia intestinalis (Giardia lamblia).